We begin with the raw amino-acid sequence, 179 residues long: UPF0316 protein BH0621 (179 aa).

A run of 3 helical transmembrane segments spans residues 9-29, 41-61, and 67-87; these read ALTM…LFTV, LAAT…SLVL, and IENL…GMKV.

This sequence belongs to the UPF0316 family.

Its subcellular location is the cell membrane. In Halalkalibacterium halodurans (strain ATCC BAA-125 / DSM 18197 / FERM 7344 / JCM 9153 / C-125) (Bacillus halodurans), this protein is UPF0316 protein BH0621.